The chain runs to 331 residues: Serine racemase (331 aa).

Residues Ser-34 and Lys-54 each coordinate ATP. Lys-59 (proton acceptor) is an active-site residue. Position 59 is an N6-(pyridoxal phosphate)lysine (Lys-59). A Ca(2+)-binding site is contributed by Thr-81. Ser-84 (proton acceptor) is an active-site residue. Pyridoxal 5'-phosphate is bound at residue Asn-86. Tyr-121 contacts ATP. Asp-178 serves as a coordination point for Mg(2+). Positions 186, 187, and 188 each coordinate pyridoxal 5'-phosphate. The Ca(2+) site is built by Glu-210, Ala-214, and Asp-216. The Mg(2+) site is built by Glu-210, Ala-214, and Asp-216. Mn(2+)-binding residues include Glu-210, Ala-214, and Asp-216. Residue Lys-278 participates in ATP binding. Ser-314 is a binding site for pyridoxal 5'-phosphate. ATP is bound at residue Asn-317.

It belongs to the serine/threonine dehydratase family. As to quaternary structure, homodimer. Mg(2+) is required as a cofactor. Mn(2+) serves as cofactor. Requires Ca(2+) as cofactor. The cofactor is pyridoxal 5'-phosphate. In terms of tissue distribution, expressed in the whole plant.

It catalyses the reaction L-serine = D-serine. The catalysed reaction is L-serine = pyruvate + NH4(+). The enzyme catalyses D-serine = pyruvate + NH4(+). Inhibited by hydroxylamine. Racemase activity is enhanced by Ca(2+), Mg(2+), Mn(2+), and is decreased by Ni(2+), Zn(2+). Hydratase activity is enhanced by Ca(2+), Mg(2+), Mn(2+), Cu(2+), Fe(2+), Ni(2+). Its function is as follows. Catalyzes the synthesis of D-serine from L-serine. Has dehydratase activity towards both L-serine and D-serine. Displays high substrate specificity for L-serine, whereas L-alanine, L-arginine, and L-glutamine were poor substrates. The sequence is that of Serine racemase (SR) from Arabidopsis thaliana (Mouse-ear cress).